Here is a 565-residue protein sequence, read N- to C-terminus: Periplasmic trehalase (565 aa).

The first 30 residues, 1-30 (MKSPTPSRPQKMALIPACIFLCFAALSVQA), serve as a signal peptide directing secretion. Substrate contacts are provided by residues R152, 159-160 (WD), N196, 205-207 (RSQ), 277-279 (RPE), and G310. Catalysis depends on proton donor/acceptor residues D312 and E496. E511 provides a ligand contact to substrate. Residues 539-565 (CDNVPATRPLSESTTQPLKQKEAEPTP) form a disordered region.

Belongs to the glycosyl hydrolase 37 family. As to quaternary structure, monomer.

Its subcellular location is the periplasm. The catalysed reaction is alpha,alpha-trehalose + H2O = alpha-D-glucose + beta-D-glucose. Functionally, provides the cells with the ability to utilize trehalose at high osmolarity by splitting it into glucose molecules that can subsequently be taken up by the phosphotransferase-mediated uptake system. This is Periplasmic trehalase from Escherichia coli (strain SMS-3-5 / SECEC).